Reading from the N-terminus, the 577-residue chain is Pentatricopeptide repeat-containing protein At2g01390 (577 aa).

PPR repeat units follow at residues 121-155 (DHFTYTTMLDIFGEAGRIQSMYSVFHLMKEKGVLI), 156-190 (DTVTYTSLIHWVSSSGDVDGAMRLWEEMRDNGCEP), 191-225 (TVVSYTAYMKMLFADGRVEEATEVYKEMLRSRVSP), 226-260 (NCHTYTVLMEYLVATGKCEEALDIFFKMQEIGVQP), 261-295 (DKAACNILIAKALKFGETSFMTRVLVYMKENGVVL), 382-416 (DSFVVSAIIETNCDRCRTEGASLAFDYSLEMGIHL), 417-451 (KKSAYLALIGNFLRSNELPKVIEVVKEMVKAQHSL), 452-482 (GCYQGAMLIHRLGFGRRPRLAADVFDLLPDD), 485-519 (GVAAYTALMDVYISAGSPEKAMKILREMREREIMP), and 520-554 (SLGTYDVLLSGLEKTSDFQKEVALLRKEKKSLVAS).

The protein belongs to the PPR family. P subfamily.

The chain is Pentatricopeptide repeat-containing protein At2g01390 from Arabidopsis thaliana (Mouse-ear cress).